Here is a 142-residue protein sequence, read N- to C-terminus: Large ribosomal subunit protein uL11 (142 aa).

This sequence belongs to the universal ribosomal protein uL11 family. In terms of assembly, part of the ribosomal stalk of the 50S ribosomal subunit. Interacts with L10 and the large rRNA to form the base of the stalk. L10 forms an elongated spine to which L12 dimers bind in a sequential fashion forming a multimeric L10(L12)X complex. Post-translationally, one or more lysine residues are methylated.

In terms of biological role, forms part of the ribosomal stalk which helps the ribosome interact with GTP-bound translation factors. This Mycoplasma capricolum subsp. capricolum (strain California kid / ATCC 27343 / NCTC 10154) protein is Large ribosomal subunit protein uL11.